We begin with the raw amino-acid sequence, 60 residues long: Large ribosomal subunit protein bL32 (60 aa).

Positions 1 to 27 are disordered; it reads MAVPRNRLSNARKNSKRAHHAKKPKSL. The segment covering 13–25 has biased composition (basic residues); that stretch reads KNSKRAHHAKKPK.

Belongs to the bacterial ribosomal protein bL32 family.

This chain is Large ribosomal subunit protein bL32, found in Protochlamydia amoebophila (strain UWE25).